A 158-amino-acid polypeptide reads, in one-letter code: Phosphopantetheine adenylyltransferase (158 aa).

Thr10 is a substrate binding site. Residues 10–11 (TF) and His18 contribute to the ATP site. 3 residues coordinate substrate: Lys42, Leu74, and Arg88. ATP contacts are provided by residues 89–91 (GLR), Glu99, and 124–130 (NSFISST).

It belongs to the bacterial CoaD family. Homohexamer. Requires Mg(2+) as cofactor.

The protein localises to the cytoplasm. The enzyme catalyses (R)-4'-phosphopantetheine + ATP + H(+) = 3'-dephospho-CoA + diphosphate. Its pathway is cofactor biosynthesis; coenzyme A biosynthesis; CoA from (R)-pantothenate: step 4/5. Reversibly transfers an adenylyl group from ATP to 4'-phosphopantetheine, yielding dephospho-CoA (dPCoA) and pyrophosphate. The sequence is that of Phosphopantetheine adenylyltransferase from Shewanella sediminis (strain HAW-EB3).